Consider the following 245-residue polypeptide: Small ribosomal subunit protein uS2 (245 aa).

It belongs to the universal ribosomal protein uS2 family.

The protein is Small ribosomal subunit protein uS2 of Pseudomonas fluorescens (strain Pf0-1).